Here is a 137-residue protein sequence, read N- to C-terminus: Basic phospholipase A2 homolog 2 (137 aa).

Residues 1 to 16 (MRTLWIMAVLLVGVEG) form the signal peptide. Intrachain disulfides connect cysteine 42-cysteine 131, cysteine 44-cysteine 60, cysteine 59-cysteine 111, cysteine 65-cysteine 137, cysteine 66-cysteine 104, cysteine 73-cysteine 97, and cysteine 91-cysteine 102. An important for membrane-damaging activities in eukaryotes and bacteria; heparin-binding region spans residues 121–133 (KKYRYYLKPLCKK).

It belongs to the phospholipase A2 family. Group II subfamily. K49 sub-subfamily. As to quaternary structure, homodimer; non-covalently linked. Binds to heparin. In terms of processing, it binds long-chain fatty acids covalently by a rapid, spontaneous, and autocatalytic process. When acylated, it binds to the surface of liposomes and isolated muscle membranes, with the fatty acid moiety inserted into the lipid bilayer and possibly acting as an anchor. As to expression, expressed by the venom gland.

The protein resides in the secreted. Heparin inhibits the myotoxic activity. Suramin inhibits the myotoxic activity. High level of membrane cholesterol content reduces cytolytic activity, whereas low level of membrane cholesterol content increases cytolytic activity. In terms of biological role, snake venom phospholipase A2 homolog that lacks enzymatic activity. Is myotoxic and induces a dose-dependent edema in the mouse foot pad. Also exhibits strong anticoagulant effects by binding to factor Xa (F10) and inhibiting the prothrombinase activity (IC(50) is 3 nM). In addition, it shows cytotoxic activity to a variety of cell types and bactericidal activity to a variety of Gram-negative and Gram-positive bacteria. Also induces a very rapid release of large amounts of potassium ions and ATP from muscle cells, which accounts for the pain reaction characteristic of viperid envenomations. The released ATP amplifies the effect of the myotoxins, acting as a 'danger signal', which spreads and causes further damage by acting on purinergic receptors. A model of myotoxic mechanism has been proposed: an apo Lys49-PLA2 is activated by the entrance of a hydrophobic molecule (e.g. fatty acid) at the hydrophobic channel of the protein leading to a reorientation of a monomer. This reorientation causes a transition between 'inactive' to 'active' states, causing alignment of C-terminal and membrane-docking sites (MDoS) side-by-side and putting the membrane-disruption sites (MDiS) in the same plane, exposed to solvent and in a symmetric position for both monomers. The MDoS region stabilizes the toxin on membrane by the interaction of charged residues with phospholipid head groups. Subsequently, the MDiS region destabilizes the membrane with penetration of hydrophobic residues. This insertion causes a disorganization of the membrane, allowing an uncontrolled influx of ions (i.e. calcium and sodium), and eventually triggering irreversible intracellular alterations and cell death. This is Basic phospholipase A2 homolog 2 from Bothrops asper (Terciopelo).